The sequence spans 270 residues: Ribosomal RNA small subunit methyltransferase A (270 aa).

S-adenosyl-L-methionine contacts are provided by His11, Leu13, Gly38, Glu59, Asp84, and Asn109.

This sequence belongs to the class I-like SAM-binding methyltransferase superfamily. rRNA adenine N(6)-methyltransferase family. RsmA subfamily.

The protein resides in the cytoplasm. The enzyme catalyses adenosine(1518)/adenosine(1519) in 16S rRNA + 4 S-adenosyl-L-methionine = N(6)-dimethyladenosine(1518)/N(6)-dimethyladenosine(1519) in 16S rRNA + 4 S-adenosyl-L-homocysteine + 4 H(+). Its function is as follows. Specifically dimethylates two adjacent adenosines (A1518 and A1519) in the loop of a conserved hairpin near the 3'-end of 16S rRNA in the 30S particle. May play a critical role in biogenesis of 30S subunits. The polypeptide is Ribosomal RNA small subunit methyltransferase A (Crocosphaera subtropica (strain ATCC 51142 / BH68) (Cyanothece sp. (strain ATCC 51142))).